A 216-amino-acid chain; its full sequence is Potassium-transporting ATPase KdpC subunit (216 aa).

Residues 12–32 traverse the membrane as a helical segment; that stretch reads LLGVSLLVFGLLYQGSLMAIG. The span at 197 to 207 shows a compositional bias: polar residues; that stretch reads QNETDQNSDMN. A disordered region spans residues 197 to 216; it reads QNETDQNSDMNASEIANGDH.

The protein belongs to the KdpC family. The system is composed of three essential subunits: KdpA, KdpB and KdpC. The complex also contains KdpF, a small non-essential subunit.

It is found in the cell membrane. Functionally, part of the high-affinity ATP-driven potassium transport (or Kdp) system, which catalyzes the hydrolysis of ATP coupled with the electrogenic transport of potassium into the cytoplasm. This subunit acts as a catalytic chaperone that increases the ATP-binding affinity of the ATP-hydrolyzing subunit KdpB by the formation of a transient KdpB/KdpC/ATP ternary complex. The Kdp system is essential for growth under K(+) limitation, and for survival under desiccation and salt crystal inclusion. This Halobacterium salinarum (strain ATCC 29341 / DSM 671 / R1) protein is Potassium-transporting ATPase KdpC subunit.